The primary structure comprises 529 residues: MLHNRMTTAFERSKEQEHEAAKNEIPSFQVFIERRDFLGAITVLKFLKSTRNTAEVGNADLWIAYCNFHLGRHEEALEIYTALKKSKNPPLDAHTLDLYRAICMLYLGQMGDARELATTLPPTPLSNRLLFHACSRLLDEESLVTYHTKLRNVSADQMALAAVHFLRTHYQQALECYEEVLQVQPECFAIYMHMALCYYKLGDYLKSEEFLMLYRENAEDSLTSLNLYAATKFRQGKMAEALKILEELQNDETIVGLPIFKHNKCLYTEMNAAVHILPPLVGIVSEARQNLVKLYIEKGQYEDAYKVVQSFEPAVSAEYTLKAAAYAYYGQTVQDMAVLQYAQAAYSTVGQSDADRDTVLGRRAMAAAYFLTGEFEEASMYLESIADIPKESEDSFMLNYSLCLAATCKVTEALERLMSVMGSTNFTPVHRTWLGRLLIRAQRSAEAFDLYRDAEKNSLQTILLMKVIANECFAAGEYQYAERAAAILVDLDKASKDHYIMIQKACIAAMELIRRGKTITPPELVYETE.

A disordered region spans residues M1–A21. The span at E11–A21 shows a compositional bias: basic and acidic residues. TPR repeat units lie at residues G57–P90, S154–C187, A189–S221, S285–L321, V359–S392, and P428–T461.

The protein belongs to the IFT56 family.

Its subcellular location is the cell projection. The protein resides in the cilium. It is found in the flagellum. The protein localises to the cytoplasm. It localises to the cytoskeleton. Its subcellular location is the flagellum axoneme. The protein resides in the flagellum basal body. Its function is as follows. Component of the intraflagellar transport complex B (IFT-B) involved in flagellar assembly. The sequence is that of Intraflagellar transport protein 56 from Giardia intestinalis (strain ATCC 50803 / WB clone C6) (Giardia lamblia).